Here is a 149-residue protein sequence, read N- to C-terminus: Oligosaccharyltransferase complex subunit ostc (149 aa).

Over 1–32 (METLFSLPFTVLECPNVKLKKPSWLHMPSAMT) the chain is Cytoplasmic. The chain crosses the membrane as a helical span at residues 33 to 53 (VYAVVIVSYFLITGGIIYDVI). Topologically, residues 54-83 (VEPPSVGSMTDEHGHQRPVAFLAYRVNGQY) are extracellular. A helical membrane pass occupies residues 84–104 (IMEGLASSFLFTMGGLGFIIL). Residues 105-117 (DRSNAPNIPKLNR) lie on the Cytoplasmic side of the membrane. The chain crosses the membrane as a helical span at residues 118 to 138 (FLLLFIGFVSVLLSFFMARVF). At 139-149 (MRMKLPGYLMG) the chain is on the extracellular side.

The protein belongs to the OSTC family. Specific component of the STT3A-containing form of the oligosaccharyltransferase (OST) complex.

The protein localises to the membrane. Its pathway is protein modification; protein glycosylation. Specific component of the STT3A-containing form of the oligosaccharyl transferase (OST) complex that catalyzes the initial transfer of a defined glycan (Glc(3)Man(9)GlcNAc(2) in eukaryotes) from the lipid carrier dolichol-pyrophosphate to an asparagine residue within an Asn-X-Ser/Thr consensus motif in nascent polypeptide chains, the first step in protein N-glycosylation. N-glycosylation occurs cotranslationally and the complex associates with the Sec61 complex at the channel-forming translocon complex that mediates protein translocation across the endoplasmic reticulum (ER). All subunits are required for a maximal enzyme activity. The polypeptide is Oligosaccharyltransferase complex subunit ostc (Danio rerio (Zebrafish)).